A 403-amino-acid polypeptide reads, in one-letter code: Octaketide synthase 2 (403 aa).

C174 is a catalytic residue. CoA is bound by residues S281 and 318–321 (GGRA).

It belongs to the thiolase-like superfamily. Chalcone/stilbene synthases family. Homodimer.

It participates in secondary metabolite biosynthesis; flavonoid biosynthesis. Functionally, catalyzes the iterative condensations of 8 molecules of malonyl-CoA to produce aromatic octaketides, SEK4 and SEK4b, the products of the minimal polyketide synthase for the benzoisochromanequinone actinorhodin. May be involved in the biosynthesis of the octaketide barbaloin. In Aloe arborescens (Kidachi aloe), this protein is Octaketide synthase 2 (PKS4).